The following is a 480-amino-acid chain: EGF-like repeat and discoidin I-like domain-containing protein 3 (480 aa).

The signal sequence occupies residues 1 to 23; that stretch reads MKHLVAAWLLVGLSLGVPQFGKG. Positions 24 to 60 constitute an EGF-like 1 domain; the sequence is DICNPNPCENGGICLSGLADDSFSCECPEGFAGPNCS. Disulfide bonds link C26-C37, C31-C48, and C50-C59. O-linked (GalNAc...) threonine glycosylation occurs at T73. EGF-like domains lie at 74 to 117 and 119 to 155; these read SAGP…IHCQ and NINE…RNCQ. 3 cysteine pairs are disulfide-bonded: C78–C89, C83–C105, and C107–C116. Residue T88 is glycosylated (O-linked (Fuc...) threonine). Residues 96-98 carry the Cell attachment site motif; it reads RGD. Residues N119, I120, and E122 each coordinate Ca(2+). Disulfide bonds link C123/C134, C128/C143, C145/C154, C158/C314, C301/C305, and C319/C476. Ca(2+) is bound by residues D136 and L137. Residue N140 is glycosylated (N-linked (GlcNAc...) asparagine). 2 F5/8 type C domains span residues 158-314 and 319-476; these read CSGP…LLGC and CSEP…LLGC.

Expressed in angioblasts and early endothelial cells. By embryonic day 13.5, also expressed in a restricted group of non-endothelial cells including chondrocytes and retinal neurons.

It localises to the secreted. Functionally, promotes adhesion of endothelial cells through interaction with the alpha-v/beta-3 integrin receptor. Inhibits formation of vascular-like structures. May be involved in regulation of vascular morphogenesis of remodeling in embryonic development. The chain is EGF-like repeat and discoidin I-like domain-containing protein 3 (Edil3) from Mus musculus (Mouse).